Reading from the N-terminus, the 171-residue chain is Shikimate kinase (171 aa).

13–18 (GVGKST) is a binding site for ATP. S17 is a Mg(2+) binding site. Substrate-binding residues include D35, R59, and G81. ATP is bound at residue R118. Residue R136 participates in substrate binding. R153 serves as a coordination point for ATP.

It belongs to the shikimate kinase family. In terms of assembly, monomer. It depends on Mg(2+) as a cofactor.

Its subcellular location is the cytoplasm. It carries out the reaction shikimate + ATP = 3-phosphoshikimate + ADP + H(+). Its pathway is metabolic intermediate biosynthesis; chorismate biosynthesis; chorismate from D-erythrose 4-phosphate and phosphoenolpyruvate: step 5/7. Functionally, catalyzes the specific phosphorylation of the 3-hydroxyl group of shikimic acid using ATP as a cosubstrate. The chain is Shikimate kinase from Streptomyces avermitilis (strain ATCC 31267 / DSM 46492 / JCM 5070 / NBRC 14893 / NCIMB 12804 / NRRL 8165 / MA-4680).